A 462-amino-acid polypeptide reads, in one-letter code: MSALKIYNTLAREKQLFTPIDPGKVRMYVCGMTVYDYCHIGHARVMVVFDLVQRWLRASGFDVTYVRNITDIDDKIIKRAAENGETISQLTQRFIDAMDEDAAALGVQKPDHEPRATNYVPQMLGLIDMLERNGLAYKAADGDVNYSVRDFAGYGKLSGKSLDDLRAGERVDVNTGKHDPLDFVLWKSSKENEPEEVKWSSKWGSGRPGWHIECSAMACELLGEQFDIHGGGADLQFPHHENEIAQSEGASGHTFVNYWMHNGFVRVDNEKMSKSLGNFFTIREVLEKFDAEVVRFFILRAHYRSQLNYSDAHLDDARNALTRMYTALKDVAPDHLPLDMTEAHAVRFIDAMNDDFNTPLAIAVLFELANEINREKSPVLARQLIGLAGIVGLLQRPAQQFLHAGLAGADEMETLIIGQIAARADAKKAKNFAEADRIRAALLEKGIILEDKPGGLTEWRRA.

Cysteine 30 is a Zn(2+) binding site. Residues 32-42 (MTVYDYCHIGH) carry the 'HIGH' region motif. Zn(2+)-binding residues include cysteine 214, histidine 239, and glutamate 243. The 'KMSKS' region motif lies at 271-275 (KMSKS). Lysine 274 contacts ATP.

The protein belongs to the class-I aminoacyl-tRNA synthetase family. In terms of assembly, monomer. Zn(2+) is required as a cofactor.

It localises to the cytoplasm. It catalyses the reaction tRNA(Cys) + L-cysteine + ATP = L-cysteinyl-tRNA(Cys) + AMP + diphosphate. This Herminiimonas arsenicoxydans protein is Cysteine--tRNA ligase.